The following is a 197-amino-acid chain: UPF0200 protein MJ1399 (197 aa).

Position 8 to 15 (G8 to S15) interacts with ATP.

It belongs to the UPF0200 family.

The polypeptide is UPF0200 protein MJ1399 (Methanocaldococcus jannaschii (strain ATCC 43067 / DSM 2661 / JAL-1 / JCM 10045 / NBRC 100440) (Methanococcus jannaschii)).